Reading from the N-terminus, the 85-residue chain is MDPKKIARINELAKKKKTEGLTAEEKVEQAKLREEYIEGYRRSVRHHIEGIKIVDEDGNDVTPEKLRQVQREKGLHGRSLDDPES.

The tract at residues 58 to 85 is disordered; it reads GNDVTPEKLRQVQREKGLHGRSLDDPES. Over residues 62–85 the composition is skewed to basic and acidic residues; that stretch reads TPEKLRQVQREKGLHGRSLDDPES.

The protein belongs to the UPF0291 family.

It localises to the cytoplasm. This Streptococcus sanguinis (strain SK36) protein is UPF0291 protein SSA_1878.